The following is a 510-amino-acid chain: Allene oxide synthase 2, chloroplastic (510 aa).

The transit peptide at 1–31 directs the protein to the chloroplast; sequence MALTLSFSLPLPSLHQKIPSKYSTFRPIIVS. Heme b-binding residues include Lys-127, His-158, and Lys-162. The (13S)-hydroperoxy-(9Z,11E)-octadecadienoate site is built by Asn-315 and Lys-321. Asn-315 contacts (13S)-hydroperoxy-(9Z,11E,15Z)-octadecatrienoate. Residues Lys-463 and Cys-465 each coordinate heme b.

Belongs to the cytochrome P450 family. It depends on heme b as a cofactor. Expressed in flower buds, leaves, roots, stems, petioles and cotyledons. Not detected in ripe fruits. Expressed in sieve elements.

It is found in the plastid. The protein resides in the chloroplast inner membrane. The enzyme catalyses (13S)-hydroperoxy-(9Z,11E,15Z)-octadecatrienoate = (9Z,13S,15Z)-12,13-epoxyoctadeca-9,11,15-trienoate + H2O. The catalysed reaction is (13S)-hydroperoxy-(9Z,11E)-octadecadienoate = (9Z,13S)-12,13-epoxyoctadeca-9,11-dienoate + H2O. In terms of biological role, cytochrome P450 of the CYP74A subfamily involved in the biosynthesis of jasmonic acid from lipoxygenase-derived hydroperoxides of free fatty acids. Catalyzes the synthesis of unstable allene oxide, which is further converted spontaneously by hydrolysis or cyclization. Metabolizes 13- but not 9-hydroperoxides of linoleic and linolenic acids. Can use 15S-hydroperoxy-11(Z),13(E),17(Z)-eicosatrienoic acid (15-HPET) and 13S-hydroperoxy-9(Z),11(E),15(Z)-octadecatrienoic acid (13-HPOT) as substrates, but only 50% activity with 13S-hydroperoxy-9(Z),11(E)-octadecadienoic acid (13-HPOD). In Solanum lycopersicum (Tomato), this protein is Allene oxide synthase 2, chloroplastic.